Reading from the N-terminus, the 246-residue chain is 3-deoxy-manno-octulosonate cytidylyltransferase (246 aa).

The protein belongs to the KdsB family.

The protein resides in the cytoplasm. It carries out the reaction 3-deoxy-alpha-D-manno-oct-2-ulosonate + CTP = CMP-3-deoxy-beta-D-manno-octulosonate + diphosphate. It functions in the pathway nucleotide-sugar biosynthesis; CMP-3-deoxy-D-manno-octulosonate biosynthesis; CMP-3-deoxy-D-manno-octulosonate from 3-deoxy-D-manno-octulosonate and CTP: step 1/1. It participates in bacterial outer membrane biogenesis; lipopolysaccharide biosynthesis. Activates KDO (a required 8-carbon sugar) for incorporation into bacterial lipopolysaccharide in Gram-negative bacteria. This Rickettsia africae (strain ESF-5) protein is 3-deoxy-manno-octulosonate cytidylyltransferase.